The primary structure comprises 120 residues: NAD(P)H-quinone oxidoreductase subunit 3, chloroplastic (120 aa).

3 helical membrane passes run 7 to 27, 64 to 84, and 88 to 108; these read YETF…AFLI, MFAL…PWAM, and ILGI…IVGS.

Belongs to the complex I subunit 3 family. In terms of assembly, NDH is composed of at least 16 different subunits, 5 of which are encoded in the nucleus.

It localises to the plastid. The protein resides in the chloroplast thylakoid membrane. The catalysed reaction is a plastoquinone + NADH + (n+1) H(+)(in) = a plastoquinol + NAD(+) + n H(+)(out). It carries out the reaction a plastoquinone + NADPH + (n+1) H(+)(in) = a plastoquinol + NADP(+) + n H(+)(out). Its function is as follows. NDH shuttles electrons from NAD(P)H:plastoquinone, via FMN and iron-sulfur (Fe-S) centers, to quinones in the photosynthetic chain and possibly in a chloroplast respiratory chain. The immediate electron acceptor for the enzyme in this species is believed to be plastoquinone. Couples the redox reaction to proton translocation, and thus conserves the redox energy in a proton gradient. The chain is NAD(P)H-quinone oxidoreductase subunit 3, chloroplastic from Cycas taitungensis (Prince sago).